We begin with the raw amino-acid sequence, 84 residues long: Molybdopterin synthase sulfur carrier subunit (84 aa).

A 1-thioglycine; alternate modification is found at Gly84. Position 84 is a glycyl adenylate; alternate (Gly84).

Belongs to the MoaD family. MOCS2A subfamily. Heterotetramer; composed of 2 small (MOCS2A) and 2 large (MOCS2B) subunits. C-terminal thiocarboxylation occurs in 2 steps, it is first acyl-adenylated (-COAMP) via the hesA/moeB/thiF part of MOCS3, then thiocarboxylated (-COSH) via the rhodanese domain of MOCS3.

It localises to the cytoplasm. It participates in cofactor biosynthesis; molybdopterin biosynthesis. Functionally, acts as a sulfur carrier required for molybdopterin biosynthesis. Component of the molybdopterin synthase complex that catalyzes the conversion of precursor Z into molybdopterin by mediating the incorporation of 2 sulfur atoms into precursor Z to generate a dithiolene group. In the complex, serves as sulfur donor by being thiocarboxylated (-COSH) at its C-terminus by MOCS3. After interaction with MOCS2B, the sulfur is then transferred to precursor Z to form molybdopterin. This chain is Molybdopterin synthase sulfur carrier subunit, found in Caenorhabditis briggsae.